Reading from the N-terminus, the 320-residue chain is GDP-L-fucose synthase (320 aa).

14 to 20 (GGSGLVG) lines the NADP(+) pocket. The active-site Proton donor/acceptor is the Y142. Residues K146, 169-172 (PTNI), and H185 each bind NADP(+). Residues K193, R214, and D276 each contribute to the substrate site.

It belongs to the NAD(P)-dependent epimerase/dehydratase family. Fucose synthase subfamily.

The catalysed reaction is GDP-beta-L-fucose + NADP(+) = GDP-4-dehydro-alpha-D-rhamnose + NADPH + H(+). It functions in the pathway nucleotide-sugar biosynthesis; GDP-L-fucose biosynthesis via de novo pathway; GDP-L-fucose from GDP-alpha-D-mannose: step 2/2. In terms of biological role, catalyzes the two-step NADP-dependent conversion of GDP-4-dehydro-6-deoxy-D-mannose to GDP-fucose, involving an epimerase and a reductase reaction. This is GDP-L-fucose synthase (ger) from Dictyostelium discoideum (Social amoeba).